Here is a 299-residue protein sequence, read N- to C-terminus: tRNA dimethylallyltransferase (299 aa).

13-20 is an ATP binding site; it reads GPTASGKT. Substrate is bound at residue 15-20; it reads TASGKT. Positions 38–41 are interaction with substrate tRNA; that stretch reads DSRQ.

Belongs to the IPP transferase family. As to quaternary structure, monomer. The cofactor is Mg(2+).

The catalysed reaction is adenosine(37) in tRNA + dimethylallyl diphosphate = N(6)-dimethylallyladenosine(37) in tRNA + diphosphate. Catalyzes the transfer of a dimethylallyl group onto the adenine at position 37 in tRNAs that read codons beginning with uridine, leading to the formation of N6-(dimethylallyl)adenosine (i(6)A). The protein is tRNA dimethylallyltransferase of Prochlorococcus marinus (strain AS9601).